The following is a 229-amino-acid chain: uncharacterized protein (229 aa).

Transmembrane regions (helical) follow at residues 6–26, 36–56, 80–99, 114–134, 144–164, 174–194, and 207–224; these read LFFV…FLPT, LVSV…ILLA, SVYD…HRIY, VLSV…HLII, IFEY…ATML, FYYH…IYKF, and YVEA…VLSS.

It belongs to the mimivirus L68/R809 family.

It is found in the membrane. This is an uncharacterized protein from Acanthamoeba polyphaga (Amoeba).